A 192-amino-acid chain; its full sequence is Large ribosomal subunit protein uL18 (192 aa).

Belongs to the universal ribosomal protein uL18 family. As to quaternary structure, part of the 50S ribosomal subunit. Contacts the 5S and 23S rRNAs.

Functionally, this is one of the proteins that bind and probably mediate the attachment of the 5S RNA into the large ribosomal subunit, where it forms part of the central protuberance. The protein is Large ribosomal subunit protein uL18 of Methanothermobacter thermautotrophicus (strain ATCC 29096 / DSM 1053 / JCM 10044 / NBRC 100330 / Delta H) (Methanobacterium thermoautotrophicum).